The chain runs to 114 residues: GTTFRTSIAENALVGSYAVVNNKGCMVHPKTPAQDMDEIASLLQVPVVAGTINRGNAAIGSGLVVNDWAAFCGLNTTATEITVVERIFQLRRDLGGGRANLLQQLRDTLVDELA.

Belongs to the eIF-6 family. As to quaternary structure, monomer. Associates with the 60S ribosomal subunit.

It is found in the cytoplasm. The protein localises to the nucleus. Its subcellular location is the nucleolus. Its function is as follows. Binds to the 60S ribosomal subunit and prevents its association with the 40S ribosomal subunit to form the 80S initiation complex in the cytoplasm. May also be involved in ribosome biogenesis. The sequence is that of Eukaryotic translation initiation factor 6 from Trypanosoma cruzi.